The following is a 391-amino-acid chain: Inner membrane protein YdcO (391 aa).

Residues 1–9 lie on the Cytoplasmic side of the membrane; that stretch reads MRLFSIPPP. Residues 10 to 30 traverse the membrane as a helical segment; that stretch reads TLLAGFLAVLIGYASSAAIIW. The Periplasmic segment spans residues 31–42; the sequence is QAAIVAGATTAQ. The chain crosses the membrane as a helical span at residues 43-63; the sequence is ISGWMTALGLAMGVSTLTLTL. Residues 64–93 are Cytoplasmic-facing; sequence WYRVPVLTAWSTPGAALLVTGLQGLTLNEA. A helical transmembrane segment spans residues 94 to 114; sequence IGVFIVTNALIVLCGITGLFA. Topologically, residues 115-123 are periplasmic; the sequence is RLMRIIPHS. Residues 124 to 144 form a helical membrane-spanning segment; it reads LAAAMLAGILLRFGLQAFASL. Over 145 to 167 the chain is Cytoplasmic; it reads DGQFTLCGSMLLVWLATKAVAPR. A helical transmembrane segment spans residues 168 to 188; it reads YAVIAAMIIGIVIVIAQGDVV. The Periplasmic portion of the chain corresponds to 189–200; that stretch reads TTDVVFKPVLPT. A helical membrane pass occupies residues 201 to 221; that stretch reads YITPDFSFAHSLSVALPLFLV. Residues 222–246 are Cytoplasmic-facing; the sequence is TMASQNAPGIAAMKAAGYSAPVSPL. The chain crosses the membrane as a helical span at residues 247–267; the sequence is IVFTGLLALVFSPFGVYSVGI. At 268–287 the chain is on the periplasmic side; that stretch reads AAITAAICQSPEAHPDKDQR. Residues 288 to 308 traverse the membrane as a helical segment; the sequence is WLAAAVAGIFYLLAGLFGSAI. Topologically, residues 309–311 are cytoplasmic; the sequence is TGM. A helical membrane pass occupies residues 312–332; it reads MAALPVSWIQMLAGLALLSTI. Residues 333–361 lie on the Periplasmic side of the membrane; sequence GGSLYQALHNERERDAAVVAFLVTASGLT. Residues 362–382 traverse the membrane as a helical segment; that stretch reads LVGIGSAFWGLIAGGVCYVVL. Over 383-391 the chain is Cytoplasmic; sequence NLIADRNRY.

Its subcellular location is the cell inner membrane. The sequence is that of Inner membrane protein YdcO (ydcO) from Escherichia coli (strain K12).